The chain runs to 391 residues: S-adenosylmethionine synthase 5 (391 aa).

Residue glutamate 9 coordinates Mg(2+). An ATP-binding site is contributed by histidine 15. A K(+)-binding site is contributed by glutamate 43. L-methionine contacts are provided by glutamate 56 and glutamine 99. ATP is bound by residues 167–169 (DGK), 235–238 (SGRF), aspartate 246, 252–253 (RK), alanine 269, lysine 273, and lysine 277. Residue aspartate 246 coordinates L-methionine. An L-methionine-binding site is contributed by lysine 277.

It belongs to the AdoMet synthase family. As to quaternary structure, homotetramer. Requires Mn(2+) as cofactor. It depends on Mg(2+) as a cofactor. Co(2+) serves as cofactor. K(+) is required as a cofactor.

Its subcellular location is the cytoplasm. The catalysed reaction is L-methionine + ATP + H2O = S-adenosyl-L-methionine + phosphate + diphosphate. The protein operates within amino-acid biosynthesis; S-adenosyl-L-methionine biosynthesis; S-adenosyl-L-methionine from L-methionine: step 1/1. Catalyzes the formation of S-adenosylmethionine from methionine and ATP. The reaction comprises two steps that are both catalyzed by the same enzyme: formation of S-adenosylmethionine (AdoMet) and triphosphate, and subsequent hydrolysis of the triphosphate. This chain is S-adenosylmethionine synthase 5 (METK5), found in Vitis vinifera (Grape).